The sequence spans 606 residues: 4-hydroxy-3-methylbut-2-en-1-yl diphosphate synthase (flavodoxin) (606 aa).

[4Fe-4S] cluster contacts are provided by Cys-513, Cys-516, Cys-547, and Glu-554.

It belongs to the IspG family. It depends on [4Fe-4S] cluster as a cofactor.

The enzyme catalyses (2E)-4-hydroxy-3-methylbut-2-enyl diphosphate + oxidized [flavodoxin] + H2O + 2 H(+) = 2-C-methyl-D-erythritol 2,4-cyclic diphosphate + reduced [flavodoxin]. Its pathway is isoprenoid biosynthesis; isopentenyl diphosphate biosynthesis via DXP pathway; isopentenyl diphosphate from 1-deoxy-D-xylulose 5-phosphate: step 5/6. Its function is as follows. Converts 2C-methyl-D-erythritol 2,4-cyclodiphosphate (ME-2,4cPP) into 1-hydroxy-2-methyl-2-(E)-butenyl 4-diphosphate. The polypeptide is 4-hydroxy-3-methylbut-2-en-1-yl diphosphate synthase (flavodoxin) (Chlamydia abortus (strain DSM 27085 / S26/3) (Chlamydophila abortus)).